The primary structure comprises 23 residues: KAEEEVEKNKEEAEEEAEKKIAE.

The segment at 1–23 (KAEEEVEKNKEEAEEEAEKKIAE) is disordered. The span at 7–23 (EKNKEEAEEEAEKKIAE) shows a compositional bias: basic and acidic residues.

Its function is as follows. Gp22 functions in head assembly. Internal peptide VII: Cleavage product of Gp22 that is incorporated into the mature phage head. The polypeptide is Major prohead-scaffolding core protein Gp22 (22) (Enterobacteria phage T2 (Bacteriophage T2)).